We begin with the raw amino-acid sequence, 231 residues long: UPF0758 protein YsxA (231 aa).

One can recognise an MPN domain in the interval V109–L231. H180, H182, and D193 together coordinate Zn(2+). Positions H180–D193 match the JAMM motif motif.

Belongs to the UPF0758 family.

The sequence is that of UPF0758 protein YsxA (ysxA) from Bacillus subtilis (strain 168).